Consider the following 681-residue polypeptide: Cobalamin-dependent radical SAM methyltransferase TokK (681 aa).

The region spanning 1–144 is the B12-binding domain; that stretch reads MSAELASRGR…ATRLSDHPDY (144 aa). Residues N18, S72, Y74, V75, H103, G126, and E127 each contribute to the cob(II)alamin site. The 226-residue stretch at 192 to 417 folds into the Radical SAM core domain; that stretch reads RGLRFYALWE…RMYVERPGTP (226 aa). [4Fe-4S] cluster contacts are provided by C206 and C210. A 5'-deoxyadenosine-binding site is contributed by F212. C213 contacts [4Fe-4S] cluster. Cob(II)alamin contacts are provided by D214 and C249. The 5'-deoxyadenosine site is built by Q312, E349, and G384.

This sequence belongs to the methyltransferase superfamily. It depends on [4Fe-4S] cluster as a cofactor. Cob(II)alamin is required as a cofactor.

It participates in antibiotic biosynthesis. Its function is as follows. Methyltransferase involved in the biosynthesis of the beta-lactam carbapenem antibiotic asparenomycin. Catalyzes three consecutive S-adenosyl-L-methionine-dependent methylations to build out the C6-isopropyl side chain in a stereocontrolled manner. The protein is Cobalamin-dependent radical SAM methyltransferase TokK of Streptomyces tokunonensis.